A 111-amino-acid chain; its full sequence is Cytochrome c6 (111 aa).

Residues 1–25 (MKRLLSLIFLVFVFFAVMLTPPALA) form the signal peptide. 4 residues coordinate heme c: C39, C42, H43, and M83.

Belongs to the cytochrome c family. PetJ subfamily. In terms of assembly, monomer. Post-translationally, binds 1 heme c group covalently per subunit.

It localises to the cellular thylakoid lumen. Functions as an electron carrier between membrane-bound cytochrome b6-f and photosystem I in oxygenic photosynthesis. This Rippkaea orientalis (strain PCC 8801 / RF-1) (Cyanothece sp. (strain PCC 8801)) protein is Cytochrome c6.